The chain runs to 309 residues: Methyltransferase AacuQ (309 aa).

The segment at 57–149 (DVGAGNGPYA…QLRPGGTFAC (93 aa)) is methyltransferase domain.

This sequence belongs to the methyltransferase superfamily.

It participates in secondary metabolite biosynthesis. Functionally, methyltransferase; part of the gene cluster that mediates the biosynthesis of the tetrahydroxanthone dimer secalonic acid D. The pathway begins with the synthesis of atrochrysone thioester by the polyketide synthase AacuL. The atrochrysone carboxyl ACP thioesterase AacuM then breaks the thioester bond and releases the atrochrysone carboxylic acid from AacuL. Atrochrysone carboxylic acid is decarboxylated by the decarboxylase AacuI, and oxidized by the anthrone oxygenase AacuG to yield emodin. Emodin is then reduced to emodin hydroquinone by a yet unidentified oxidoreductase. A-ring reduction by the short chain dehydrogenase AacuN, dehydration by the scytalone dehydratase-like protein AacuK and probable spontaneous re-oxidation, results in overall deoxygenation to chrysophanol. Baeyer-Villiger oxidation by the Baeyer-Villiger monooxygenase (BVMO) AacuH then yields monodictyphenone. Monodictyphenone is transformed into compounds with the tetrahydroxanthone skeleton via methylesterification by the methyltransferase AacuQ, followed by the action of the flavin-dependent monooxygenase AacuC, the isomerase AacuP, and the short chain dehydrogenase/reductase AacuF or AacuD. AacuF and AacuD should accept the same compound as a substrate but perform the ketoreduction with a different stereoselectivity, thus yielding blennolides B and A, respectively. In the final step of the biosynthesis, the cytochrome P450 monooxygenase AacuE accepts blennolide B and/or blennolide A to conduct the dimerization reaction to furnish the tetrahydroxanthone dimers, secalonic acids D, B, and F. In Aspergillus aculeatus (strain ATCC 16872 / CBS 172.66 / WB 5094), this protein is Methyltransferase AacuQ.